The following is a 243-amino-acid chain: Trypsin (243 aa).

A signal peptide spans 1–15 (MKFLLLCVLLGAAAA). A propeptide spans 16 to 20 (FDDDK) (activation peptide). A Peptidase S1 domain is found at 21–241 (IIGGATCAKS…YNAWIQNTIA (221 aa)). 6 cysteine pairs are disulfide-bonded: cysteine 27/cysteine 157, cysteine 45/cysteine 61, cysteine 129/cysteine 230, cysteine 136/cysteine 203, cysteine 168/cysteine 182, and cysteine 193/cysteine 217. Histidine 60 serves as the catalytic Charge relay system. Positions 72, 74, and 82 each coordinate Ca(2+). Aspartate 104 (charge relay system) is an active-site residue. Catalysis depends on serine 197, which acts as the Charge relay system.

It belongs to the peptidase S1 family. It depends on Ca(2+) as a cofactor.

The protein localises to the secreted. It is found in the extracellular space. It carries out the reaction Preferential cleavage: Arg-|-Xaa, Lys-|-Xaa.. The protein is Trypsin of Xenopus laevis (African clawed frog).